Reading from the N-terminus, the 265-residue chain is MNWGFLQGILSGVNKYSTALGRIWLSVVFIFRVLVYVVAAEEVWDDEQKDFICNTKQPGCPNVCYDEFFPVSHVRLWALQLILVTCPSLLVVMHVAYREERERKHRLKHGPDAPALYSNLSKKRGGLWWTYLLSLIFKAAVDSGFLYIFHCIYKDYDMPRVVACSVQPCPHTVDCYISRPTEKKVFTYFMVVTAAICILLNLSEVAYLVGKRCMEVFRPRRQKTSRRHQLPDTCPPYVISKGHPQDESTVLTKAGMATVDAGVYP.

An intramembrane segment occupies 2-13; sequence NWGFLQGILSGV. Residues 14–20 are Cytoplasmic-facing; sequence NKYSTAL. A helical transmembrane segment spans residues 21–40; that stretch reads GRIWLSVVFIFRVLVYVVAA. Residues 41-73 are Extracellular-facing; the sequence is EEVWDDEQKDFICNTKQPGCPNVCYDEFFPVSH. Cystine bridges form between Cys-53-Cys-175, Cys-60-Cys-169, and Cys-64-Cys-164. The helical transmembrane segment at 74–94 threads the bilayer; the sequence is VRLWALQLILVTCPSLLVVMH. Residues 95–130 lie on the Cytoplasmic side of the membrane; sequence VAYREERERKHRLKHGPDAPALYSNLSKKRGGLWWT. The chain crosses the membrane as a helical span at residues 131 to 151; it reads YLLSLIFKAAVDSGFLYIFHC. Residues 152–184 lie on the Extracellular side of the membrane; it reads IYKDYDMPRVVACSVQPCPHTVDCYISRPTEKK. The chain crosses the membrane as a helical span at residues 185-205; it reads VFTYFMVVTAAICILLNLSEV. Residues 206 to 265 are Cytoplasmic-facing; the sequence is AYLVGKRCMEVFRPRRQKTSRRHQLPDTCPPYVISKGHPQDESTVLTKAGMATVDAGVYP.

This sequence belongs to the connexin family. Beta-type (group I) subfamily. A hemichannel or connexon is composed of a hexamer of connexins. A functional gap junction is formed by the apposition of two hemichannels. Forms heteromeric channels with GJB2. Detected in adult heart, kidney, skin and cochlea, where it is detected in spiral ganglion, stria vascularis, spiral limbus and spiral ligament (at protein level).

It localises to the cell membrane. Its subcellular location is the cell junction. The protein resides in the gap junction. Structural component of gap junctions. Gap junctions are dodecameric channels that connect the cytoplasm of adjoining cells. They are formed by the docking of two hexameric hemichannels, one from each cell membrane. Small molecules and ions diffuse from one cell to a neighboring cell via the central pore. This is Gap junction beta-4 protein (Gjb4) from Rattus norvegicus (Rat).